Consider the following 167-residue polypeptide: MAASCPCGSNRTYALCCKIAHKHHANVITPEQLMRSRYSAHVLGLVDYVVNTYHPSCHAEEQREGIAESIENDWCKLEVVKAEVGSNENEGFVEFNAYFDEDGKRYCMTERSRFVKEDGLWYYIDGTFPEDEPEPDPRLNQSVSSLKVGRNDPCICGSGKKFKKCCG.

This sequence belongs to the UPF0225 family.

The polypeptide is UPF0225 protein VV1_2912 (Vibrio vulnificus (strain CMCP6)).